Here is a 1241-residue protein sequence, read N- to C-terminus: ATP-dependent helicase/nuclease subunit A (1241 aa).

A UvrD-like helicase ATP-binding domain is found at 12 to 485 (SQWTDDQWKA…IDLAKNFRSR (474 aa)). Position 33 to 40 (33 to 40 (AAAGSGKT)) interacts with ATP. One can recognise a UvrD-like helicase C-terminal domain in the interval 505 to 805 (GEIDYDADAE…RIMTIHKSKG (301 aa)).

Belongs to the helicase family. AddA subfamily. Heterodimer of AddA and AddB/RexB. Mg(2+) serves as cofactor.

It catalyses the reaction Couples ATP hydrolysis with the unwinding of duplex DNA by translocating in the 3'-5' direction.. The catalysed reaction is ATP + H2O = ADP + phosphate + H(+). In terms of biological role, the heterodimer acts as both an ATP-dependent DNA helicase and an ATP-dependent, dual-direction single-stranded exonuclease. Recognizes the chi site generating a DNA molecule suitable for the initiation of homologous recombination. The AddA nuclease domain is required for chi fragment generation; this subunit has the helicase and 3' -&gt; 5' nuclease activities. This Bacillus mycoides (strain KBAB4) (Bacillus weihenstephanensis) protein is ATP-dependent helicase/nuclease subunit A.